We begin with the raw amino-acid sequence, 528 residues long: MKLSSAFVLSAITVAALGESITTTITATKNGHVYTKTVTQDATFVWAGEGAAVTSAVTEASTVAATSAAAETSVAAETSIVEPSTSAQGTSADEGSGSSITTTITATKNGHVYTKTVTQDATFVWTGEGERAPASTVATVETSVAAETSVAEPSTSAQGTSADEGSGSSITTTITATKNGHVYTKTVTQDATFVWTGEGERAPVSTVATVETAASPVTSVAEPSASTDEGSGSSITTTITATKNGHVYTKTVTQDATFVWTGEGERAPASTVATSSISAIEIPSTTEASIVEASSAVETSSAAETSSAVETSSAVETSSAVETSSAAETSSAAETSSAVETSSAVEISSAVETSAVETSSSSSTIETTSVKSLSPTQTSLSSSVQASSPIETSSAAKTSSVVPTFSSTTTENSSNSKSTSAVVASTTTSSESSATIVTPTRIGQAYTESSSRDAQSVRTHESNNWSSSSSASTKMVSSITRVQTTTAGIFTNGKSSTTPQIVNYTGAADSIAAGTGLMGAALAAVIFL.

The N-terminal stretch at 1 to 18 is a signal peptide; that stretch reads MKLSSAFVLSAITVAALG. 3 repeat units span residues 20 to 98, 99 to 168, and 169 to 233. Residues 20 to 274 are 4 X approximate tandem repeats; that stretch reads SITTTITATK…ERAPASTVAT (255 aa). Disordered stretches follow at residues 79-100, 145-172, and 214-234; these read SIVE…GSSI, AAET…SITT, and ASPV…SGSS. Polar residues-rich tracts occupy residues 81 to 93 and 145 to 163; these read VEPS…TSAD and AAET…TSAD. The 1-4; truncated repeat unit spans residues 234 to 274; it reads SITTTITATKNGHVYTKTVTQDATFVWTGEGERAPASTVAT. Repeat copies occupy residues 289-294, 295-300, 301-306, 307-312, 313-318, 319-324, 325-330, 331-336, 337-342, 343-348, 349-353, and 354-359. The segment at 289–359 is 12 X 6 AA approximate tandem repeats, Ser/Thr-rich; the sequence is SIVEASSAVE…AVETSAVETS (71 aa). 2 stretches are compositionally biased toward low complexity: residues 298–388 and 398–435; these read ETSS…QASS and TSSV…SSAT. A disordered region spans residues 298–471; it reads ETSSAAETSS…SNNWSSSSSA (174 aa). An N-linked (GlcNAc...) asparagine glycan is attached at asparagine 412. Residues 446–457 show a composition bias toward polar residues; that stretch reads YTESSSRDAQSV. The span at 462 to 471 shows a compositional bias: low complexity; the sequence is SNNWSSSSSA. A glycan (N-linked (GlcNAc...) asparagine) is linked at asparagine 464. Position 488 to 495 (488 to 495) interacts with ATP; sequence GIFTNGKS. An N-linked (GlcNAc...) asparagine glycan is attached at asparagine 503. Glycine 506 carries GPI-anchor amidated glycine lipidation. Positions 507–528 are cleaved as a propeptide — removed in mature form; the sequence is AADSIAAGTGLMGAALAAVIFL.

In terms of processing, the GPI-anchor is attached to the protein in the endoplasmic reticulum and serves to target the protein to the cell surface. There, the glucosamine-inositol phospholipid moiety is cleaved off and the GPI-modified mannoprotein is covalently attached via its lipidless GPI glycan remnant to the 1,6-beta-glucan of the outer cell wall layer.

It is found in the secreted. The protein resides in the cell wall. It localises to the membrane. Its function is as follows. Involved in the uptake of non-siderophore sources of iron and the siderophores ferrioxamine B and ferrichrome. Has a role in the retention of iron in the cell wall and periplasmic space. The protein is Facilitator of iron transport 1 (FIT1) of Saccharomyces cerevisiae (strain ATCC 204508 / S288c) (Baker's yeast).